The chain runs to 198 residues: Glycerol-3-phosphate acyltransferase (198 aa).

6 consecutive transmembrane segments (helical) span residues Met-1–Phe-21, Trp-50–Ala-70, Asn-77–Leu-97, Met-111–Leu-131, Ile-136–Ile-156, and Gly-157–Lys-177.

This sequence belongs to the PlsY family. In terms of assembly, probably interacts with PlsX.

It is found in the cell inner membrane. It catalyses the reaction an acyl phosphate + sn-glycerol 3-phosphate = a 1-acyl-sn-glycero-3-phosphate + phosphate. Its pathway is lipid metabolism; phospholipid metabolism. Catalyzes the transfer of an acyl group from acyl-phosphate (acyl-PO(4)) to glycerol-3-phosphate (G3P) to form lysophosphatidic acid (LPA). This enzyme utilizes acyl-phosphate as fatty acyl donor, but not acyl-CoA or acyl-ACP. In Prochlorococcus marinus subsp. pastoris (strain CCMP1986 / NIES-2087 / MED4), this protein is Glycerol-3-phosphate acyltransferase.